Here is a 198-residue protein sequence, read N- to C-terminus: Peptidyl-tRNA hydrolase (198 aa).

Tyr14 is a binding site for tRNA. His19 functions as the Proton acceptor in the catalytic mechanism. TRNA is bound by residues Tyr64, Asn66, and Asn112.

Belongs to the PTH family. As to quaternary structure, monomer.

The protein resides in the cytoplasm. It carries out the reaction an N-acyl-L-alpha-aminoacyl-tRNA + H2O = an N-acyl-L-amino acid + a tRNA + H(+). Its function is as follows. Hydrolyzes ribosome-free peptidyl-tRNAs (with 1 or more amino acids incorporated), which drop off the ribosome during protein synthesis, or as a result of ribosome stalling. In terms of biological role, catalyzes the release of premature peptidyl moieties from peptidyl-tRNA molecules trapped in stalled 50S ribosomal subunits, and thus maintains levels of free tRNAs and 50S ribosomes. This chain is Peptidyl-tRNA hydrolase, found in Beijerinckia indica subsp. indica (strain ATCC 9039 / DSM 1715 / NCIMB 8712).